The chain runs to 249 residues: Microvitellogenin (249 aa).

The first 17 residues, 1–17 (MLRTTVVLLTLAAIAFA), serve as a signal peptide directing secretion.

Its function is as follows. Small vitellogenic protein found in females. It is synthesized in the fat body, secreted into the hemolymph, and taken up by developing oocytes. The chain is Microvitellogenin (MVG) from Manduca sexta (Tobacco hawkmoth).